The primary structure comprises 372 residues: MISENGYMDLMRNCIKWNSRQMEDRKKRLRFPYYEHQTATAQRESRFTTRNVDHMYPSNDPNTVVQFATERWKKSKSQPPSDAVEMSMFLRENPSIQVAIDHLTPQVVGPTTESVSDSSNDSTTIRPSRQTQIKEEYRDDYVLDDELSPDEFGSDEDDWSSRKRRKGNLGPVQKATSSRKKVPTTRSSVSRLTPSRSIVKETKYEEPEEKTYPCDKCSAKYKSLAGLSYHQSYLHDQKSSQPLVKLLSPSIEISTSCDFCSGTAFMNKNTKLPEDLVSCHDCGRSGHPSCLNFNQNVTKIIKRSGWQCLECKSCTICGTSENDDKLLFCDDCDRGYHLYCLTPALEKAPDDEYSCRLCQVEFGDKASAPAKK.

The tract at residues 108–204 is disordered; it reads VGPTTESVSD…SRSIVKETKY (97 aa). A compositionally biased stretch (polar residues) spans 109 to 131; the sequence is GPTTESVSDSSNDSTTIRPSRQT. Over residues 132-141 the composition is skewed to basic and acidic residues; it reads QIKEEYRDDY. Over residues 142–158 the composition is skewed to acidic residues; that stretch reads VLDDELSPDEFGSDEDD. The segment covering 184 to 196 has biased composition (polar residues); sequence TTRSSVSRLTPSR. The segment at 212–235 adopts a C2H2-type zinc-finger fold; that stretch reads YPCDKCSAKYKSLAGLSYHQSYLH. 2 PHD-type zinc fingers span residues 256 to 314 and 316 to 361; these read SCDF…CKSC and ICGT…CQVE.

Belongs to the requiem/DPF family.

The protein localises to the nucleus. It localises to the cytoplasm. Its function is as follows. Probable transcription factor, involved in meiosis and stress protection. This chain is Zinc finger protein dpff-1, found in Caenorhabditis elegans.